The sequence spans 441 residues: Synaptotagmin-1 (441 aa).

At 1–69 the chain is on the vesicular side; it reads MVKLDFSSQD…DVVKEKVMQQ (69 aa). Residues 70–96 form a helical membrane-spanning segment; it reads TGMPEWAFVFLGFVFILLVLACAFCLI. Topologically, residues 97–441 are cytoplasmic; the sequence is RKLFGKKRHG…EEGDKKDDKK (345 aa). 2 C2 domains span residues 159 to 278 and 292 to 425; these read KLGR…EEWK and SLGD…AQWH. Ca(2+) is bound by residues Asp-190, Asp-196, Asp-248, Phe-249, Asp-250, Ser-253, Lys-254, Asp-256, Asp-323, Asp-329, Asp-383, Asp-385, and Asp-391.

The protein belongs to the synaptotagmin family. The cofactor is Ca(2+). In terms of tissue distribution, localized to regions known to be rich in synapses and appears to be associated with synaptic vesicles. Also found in some non-neuronal secretory structures.

Its subcellular location is the cytoplasmic vesicle. It is found in the secretory vesicle. It localises to the synaptic vesicle membrane. The protein resides in the synapse. Its function is as follows. May have a regulatory role in the membrane interactions during trafficking of synaptic vesicles at the active zone of the synapse. It binds acidic phospholipids with a specificity that requires the presence of both an acidic head group and a diacyl backbone. Involved in necrotic cell death. The sequence is that of Synaptotagmin-1 (snt-1) from Caenorhabditis elegans.